The primary structure comprises 166 residues: Deglycase PYRAB04690 (166 aa).

The 166-residue stretch at 1-166 folds into the PfpI endopeptidase domain; sequence MRVLILSADQ…WMREFVKLLK (166 aa). H101 is a catalytic residue.

Belongs to the peptidase C56 family. As to quaternary structure, homohexamer formed by a dimer of trimers that assemble into a hollow ring structure.

Its subcellular location is the cytoplasm. It carries out the reaction N(omega)-(1-hydroxy-2-oxopropyl)-L-arginyl-[protein] + H2O = lactate + L-arginyl-[protein] + H(+). The enzyme catalyses N(6)-(1-hydroxy-2-oxopropyl)-L-lysyl-[protein] + H2O = lactate + L-lysyl-[protein] + H(+). The catalysed reaction is S-(1-hydroxy-2-oxopropyl)-L-cysteinyl-[protein] + H2O = lactate + L-cysteinyl-[protein] + H(+). It catalyses the reaction N(omega)-(1-hydroxy-2-oxoethyl)-L-arginyl-[protein] + H2O = L-arginyl-[protein] + glycolate + H(+). It carries out the reaction N(6)-(1-hydroxy-2-oxoethyl)-L-lysyl-[protein] + H2O = glycolate + L-lysyl-[protein] + H(+). The enzyme catalyses S-(1-hydroxy-2-oxoethyl)-L-cysteinyl-[protein] + H2O = glycolate + L-cysteinyl-[protein] + H(+). Deglycase that catalyzes the deglycation of the Maillard adducts formed between amino groups of proteins and reactive carbonyl groups of glyoxals. Thus, functions as a protein deglycase that repairs methylglyoxal- and glyoxal-glycated proteins, and releases repaired proteins and lactate or glycolate, respectively. Deglycates cysteine, arginine and lysine residues in proteins, and thus reactivates these proteins by reversing glycation by glyoxals. Acts on early glycation intermediates (hemithioacetals and aminocarbinols), preventing the formation of advanced glycation endproducts (AGE) that cause irreversible damage. Also displays proteolytic activity. The sequence is that of Deglycase PYRAB04690 from Pyrococcus abyssi (strain GE5 / Orsay).